Reading from the N-terminus, the 857-residue chain is Catalase-peroxidase (857 aa).

The segment at residues Trp207–Tyr330 is a cross-link (tryptophyl-tyrosyl-methioninium (Trp-Tyr) (with M-356)). The active-site Proton acceptor is the His208. A cross-link (tryptophyl-tyrosyl-methioninium (Tyr-Met) (with W-207)) is located at residues Tyr330–Met356. His371 is a binding site for heme b.

Belongs to the peroxidase family. Peroxidase/catalase subfamily. In terms of assembly, homodimer or homotetramer. Heme b is required as a cofactor. Post-translationally, formation of the three residue Trp-Tyr-Met cross-link is important for the catalase, but not the peroxidase activity of the enzyme.

It carries out the reaction H2O2 + AH2 = A + 2 H2O. It catalyses the reaction 2 H2O2 = O2 + 2 H2O. Bifunctional enzyme with both catalase and broad-spectrum peroxidase activity. The protein is Catalase-peroxidase of Rhodopirellula baltica (strain DSM 10527 / NCIMB 13988 / SH1).